We begin with the raw amino-acid sequence, 358 residues long: DnaJ homolog subfamily B member 11 (358 aa).

The signal sequence occupies residues 1-22; it reads MAPQNLSTFCLLLLYLIGAVIA. Positions 25-90 constitute a J domain; that stretch reads DFYKILGVPR…EKRKQYDTYG (66 aa). The residue at position 188 (Thr188) is a Phosphothreonine. N-linked (GlcNAc...) asparagine glycosylation is present at Asn261.

Part of a large chaperone multiprotein complex comprising DNAJB11, HSP90B1, HSPA5, HYOU, PDIA2, PDIA4, PDIA6, PPIB, SDF2L1, UGGT1 and very small amounts of ERP29, but not, or at very low levels, CALR nor CANX. Binds to denatured substrates in an ATP-independent manner. Interacts via the J domain with HSPA5 in an ATP-dependent manner. Contains high-mannose Endo H-sensitive carbohydrates. In terms of processing, cys-169, Cys-171, Cys-193 and Cys-196 form intramolecular disulfide bonds. The preferential partner for each Cys is not known.

It localises to the endoplasmic reticulum lumen. As a co-chaperone for HSPA5 it is required for proper folding, trafficking or degradation of proteins. Binds directly to both unfolded proteins that are substrates for ERAD and nascent unfolded peptide chains, but dissociates from the HSPA5-unfolded protein complex before folding is completed. May help recruiting HSPA5 and other chaperones to the substrate. Stimulates HSPA5 ATPase activity. It is necessary for maturation and correct trafficking of PKD1. This Rattus norvegicus (Rat) protein is DnaJ homolog subfamily B member 11 (Dnajb11).